We begin with the raw amino-acid sequence, 65 residues long: Small ribosomal subunit protein bS21 (65 aa).

Belongs to the bacterial ribosomal protein bS21 family.

The polypeptide is Small ribosomal subunit protein bS21 (Flavobacterium psychrophilum (strain ATCC 49511 / DSM 21280 / CIP 103535 / JIP02/86)).